Consider the following 179-residue polypeptide: Large ribosomal subunit protein uL5 (179 aa).

Belongs to the universal ribosomal protein uL5 family. Part of the 50S ribosomal subunit; part of the 5S rRNA/L5/L18/L25 subcomplex. Contacts the 5S rRNA and the P site tRNA. Forms a bridge to the 30S subunit in the 70S ribosome.

Functionally, this is one of the proteins that bind and probably mediate the attachment of the 5S RNA into the large ribosomal subunit, where it forms part of the central protuberance. In the 70S ribosome it contacts protein S13 of the 30S subunit (bridge B1b), connecting the 2 subunits; this bridge is implicated in subunit movement. Contacts the P site tRNA; the 5S rRNA and some of its associated proteins might help stabilize positioning of ribosome-bound tRNAs. In Dehalococcoides mccartyi (strain ATCC BAA-2100 / JCM 16839 / KCTC 5957 / BAV1), this protein is Large ribosomal subunit protein uL5.